The primary structure comprises 218 residues: MRVGVIRFPGSNCDRDVHHVLELAGAEPEYVWWNQRNLDHLDAVVIPGGFSYGDYLRAGAIAAITPVMDAVRELVREEKPVLGICNGAQILAEVGLVPGVFTVNEHPKFNCQWTELRVKTTRTPFTGLFKKDEVIRMPVAHAEGRYYHDNISEVWENDQVVLQFHGENPNGSLDGITGVCDESGLVCAVMPHPERASEEILGSVDGFKFFRGILKFRG.

Positions 2 to 218 (RVGVIRFPGS…FFRGILKFRG (217 aa)) constitute a Glutamine amidotransferase type-1 domain. Cys-85 acts as the Nucleophile in catalysis. Active-site residues include His-192 and Glu-194.

As to quaternary structure, part of the FGAM synthase complex composed of 1 PurL, 1 PurQ and 2 PurS subunits.

It is found in the cytoplasm. It carries out the reaction N(2)-formyl-N(1)-(5-phospho-beta-D-ribosyl)glycinamide + L-glutamine + ATP + H2O = 2-formamido-N(1)-(5-O-phospho-beta-D-ribosyl)acetamidine + L-glutamate + ADP + phosphate + H(+). The enzyme catalyses L-glutamine + H2O = L-glutamate + NH4(+). Its pathway is purine metabolism; IMP biosynthesis via de novo pathway; 5-amino-1-(5-phospho-D-ribosyl)imidazole from N(2)-formyl-N(1)-(5-phospho-D-ribosyl)glycinamide: step 1/2. Its function is as follows. Part of the phosphoribosylformylglycinamidine synthase complex involved in the purines biosynthetic pathway. Catalyzes the ATP-dependent conversion of formylglycinamide ribonucleotide (FGAR) and glutamine to yield formylglycinamidine ribonucleotide (FGAM) and glutamate. The FGAM synthase complex is composed of three subunits. PurQ produces an ammonia molecule by converting glutamine to glutamate. PurL transfers the ammonia molecule to FGAR to form FGAM in an ATP-dependent manner. PurS interacts with PurQ and PurL and is thought to assist in the transfer of the ammonia molecule from PurQ to PurL. This Methanothermobacter thermautotrophicus (strain ATCC 29096 / DSM 1053 / JCM 10044 / NBRC 100330 / Delta H) (Methanobacterium thermoautotrophicum) protein is Phosphoribosylformylglycinamidine synthase subunit PurQ.